Reading from the N-terminus, the 90-residue chain is Phosphocarrier protein HPr (90 aa).

The HPr domain occupies 1-89; it reads MPAREITIIN…ELINNFFDEG (89 aa). His15 serves as the catalytic Pros-phosphohistidine intermediate.

The protein belongs to the HPr family.

The protein localises to the cytoplasm. Functionally, general (non sugar-specific) component of the phosphoenolpyruvate-dependent sugar phosphotransferase system (sugar PTS). This major carbohydrate active-transport system catalyzes the phosphorylation of incoming sugar substrates concomitantly with their translocation across the cell membrane. The phosphoryl group from phosphoenolpyruvate (PEP) is transferred to the phosphoryl carrier protein HPr by enzyme I. Phospho-HPr then transfers it to the PTS EIIA domain. The sequence is that of Phosphocarrier protein HPr (ptsH) from Pseudomonas putida (Arthrobacter siderocapsulatus).